Reading from the N-terminus, the 421-residue chain is Tyrosine--tRNA ligase (421 aa).

An L-tyrosine-binding site is contributed by Tyr-35. The 'HIGH' region signature appears at 40-49; it reads PTGPSLHAGH. L-tyrosine is bound by residues Tyr-169 and Gln-173. A 'KMSKS' region motif is present at residues 229–233; that stretch reads KFGKS. Lys-232 contacts ATP. Positions 354 to 420 constitute an S4 RNA-binding domain; the sequence is RTIVDLLIAS…GKKNFAGVKI (67 aa).

The protein belongs to the class-I aminoacyl-tRNA synthetase family. TyrS type 1 subfamily. As to quaternary structure, homodimer.

The protein resides in the cytoplasm. It carries out the reaction tRNA(Tyr) + L-tyrosine + ATP = L-tyrosyl-tRNA(Tyr) + AMP + diphosphate + H(+). Catalyzes the attachment of tyrosine to tRNA(Tyr) in a two-step reaction: tyrosine is first activated by ATP to form Tyr-AMP and then transferred to the acceptor end of tRNA(Tyr). This chain is Tyrosine--tRNA ligase, found in Corynebacterium efficiens (strain DSM 44549 / YS-314 / AJ 12310 / JCM 11189 / NBRC 100395).